Reading from the N-terminus, the 159-residue chain is UPF0587 protein v1g245604 (159 aa).

The Zn(2+) site is built by Cys-33, Cys-36, Cys-67, and Cys-70.

The protein belongs to the UPF0587 family.

The protein is UPF0587 protein v1g245604 of Nematostella vectensis (Starlet sea anemone).